Consider the following 171-residue polypeptide: Probable chorismate pyruvate-lyase (171 aa).

Met-36, Arg-78, Leu-116, and Glu-157 together coordinate substrate.

It belongs to the UbiC family.

It localises to the cytoplasm. The enzyme catalyses chorismate = 4-hydroxybenzoate + pyruvate. The protein operates within cofactor biosynthesis; ubiquinone biosynthesis. In terms of biological role, removes the pyruvyl group from chorismate, with concomitant aromatization of the ring, to provide 4-hydroxybenzoate (4HB) for the ubiquinone pathway. The protein is Probable chorismate pyruvate-lyase of Bartonella henselae (strain ATCC 49882 / DSM 28221 / CCUG 30454 / Houston 1) (Rochalimaea henselae).